A 141-amino-acid polypeptide reads, in one-letter code: Hemoglobin subunit alpha (141 aa).

In terms of domain architecture, Globin spans 1 to 141 (VLSAADKSNV…VSTVLTSKYR (141 aa)). A Phosphoserine modification is found at S3. N6-succinyllysine is present on residues K7 and K11. K16 is subject to N6-acetyllysine; alternate. Residue K16 is modified to N6-succinyllysine; alternate. Phosphotyrosine is present on Y24. S35 is subject to Phosphoserine. K40 carries the post-translational modification N6-succinyllysine. Position 49 is a phosphoserine (S49). Position 58 (H58) interacts with O2. H87 is a binding site for heme b. S102 carries the phosphoserine modification. The residue at position 108 (T108) is a Phosphothreonine. Residue S124 is modified to Phosphoserine. 2 positions are modified to phosphothreonine: T134 and T137. S138 is subject to Phosphoserine.

This sequence belongs to the globin family. As to quaternary structure, heterotetramer of two alpha chains and two beta chains. In terms of tissue distribution, red blood cells.

In terms of biological role, involved in oxygen transport from the lung to the various peripheral tissues. Hemopressin acts as an antagonist peptide of the cannabinoid receptor CNR1. Hemopressin-binding efficiently blocks cannabinoid receptor CNR1 and subsequent signaling. The sequence is that of Hemoglobin subunit alpha (HBA) from Felis catus (Cat).